We begin with the raw amino-acid sequence, 346 residues long: Sulfate/thiosulfate import ATP-binding protein CysA (346 aa).

One can recognise an ABC transporter domain in the interval 3–237 (VRVANVRKEF…PNSPFVYGFI (235 aa)). Residue 35-42 (GPSGSGKT) participates in ATP binding.

Belongs to the ABC transporter superfamily. Sulfate/tungstate importer (TC 3.A.1.6) family. In terms of assembly, the complex is composed of two ATP-binding proteins (CysA), two transmembrane proteins (CysT and CysW) and a solute-binding protein (CysP).

The protein resides in the cell inner membrane. It carries out the reaction sulfate(out) + ATP + H2O = sulfate(in) + ADP + phosphate + H(+). The enzyme catalyses thiosulfate(out) + ATP + H2O = thiosulfate(in) + ADP + phosphate + H(+). Functionally, part of the ABC transporter complex CysAWTP involved in sulfate/thiosulfate import. Responsible for energy coupling to the transport system. The sequence is that of Sulfate/thiosulfate import ATP-binding protein CysA from Mesorhizobium japonicum (strain LMG 29417 / CECT 9101 / MAFF 303099) (Mesorhizobium loti (strain MAFF 303099)).